Reading from the N-terminus, the 567-residue chain is Thiol:disulfide interchange protein DsbD (567 aa).

The N-terminal stretch at 1–19 is a signal peptide; the sequence is MAQRIFTLILLLCSTSAFA. 2 cysteine pairs are disulfide-bonded: C122–C128 and C185–C307. 7 consecutive transmembrane segments (helical) span residues 170 to 192, 212 to 234, 246 to 268, 297 to 319, 326 to 348, 358 to 380, and 387 to 409; these read ALWA…MYPL, LAFI…VAAA, YVLI…LFTL, GAIA…LLYI, WLGG…LVTV, GPWM…VFLL, and AWGL…ITSL. The region spanning 435–567 is the Thioredoxin domain; sequence QDWAFGSPSA…FSAHLHDRQP (133 aa). C482 and C485 form a disulfide bridge.

Belongs to the thioredoxin family. DsbD subfamily.

The protein resides in the cell inner membrane. It carries out the reaction [protein]-dithiol + NAD(+) = [protein]-disulfide + NADH + H(+). It catalyses the reaction [protein]-dithiol + NADP(+) = [protein]-disulfide + NADPH + H(+). Required to facilitate the formation of correct disulfide bonds in some periplasmic proteins and for the assembly of the periplasmic c-type cytochromes. Acts by transferring electrons from cytoplasmic thioredoxin to the periplasm. This transfer involves a cascade of disulfide bond formation and reduction steps. This Salmonella typhi protein is Thiol:disulfide interchange protein DsbD.